A 550-amino-acid polypeptide reads, in one-letter code: MAAKEVLFGNDARVKMLAGVNVLANAVKVTLGPKGRNVVLDKSFGAPLITKDGVSVAKEIELEDKFENMGAQMVKEVASKANDAAGDGTTTATVLAQAIVTEGLKAVAAGMNPMDLKRGIDKAVVAAVAELKNLSQECADTNAIAQVGTISANSDETIGEIIATAMEKVGKEGVITVEEGQALENELDVVEGMQFDRGYLSPYFINKPETGSVELESPFILLVDKKVSNIRELLPILEGLAKTGKPLLIVAEDVEGEALATLVVNNMRGIVKVAAVKAPGFGDRRKAMLQDIAILTGGTVIAEEIGLELEKATLEDLGTAKRVIITKDDTTIIDGTGEQDQIQARVAQIKVQAEESTSDYDKEKLQERMAKLAGGVAVIKVGAATEVEMKEKKARVEDALHATRAAVEEGVVAGGGVALVRVASKIADVEVINEDQKHGVVIALRAMEAPLRQIATNAGEESSVVANNVKNGSGNYGYNAGNDTYGDMLEMGILDPTKVTRSALQFAASIAGLMITTEAMVGEVPQEAAGAPDMGGMGGMGGMGGMGGMM.

Residues 30–33, K51, 87–91, G415, and D495 each bind ATP; these read TLGP and DGTTT.

The protein belongs to the chaperonin (HSP60) family. In terms of assembly, forms a cylinder of 14 subunits composed of two heptameric rings stacked back-to-back. Interacts with the co-chaperonin GroES.

It is found in the cytoplasm. It carries out the reaction ATP + H2O + a folded polypeptide = ADP + phosphate + an unfolded polypeptide.. In terms of biological role, together with its co-chaperonin GroES, plays an essential role in assisting protein folding. The GroEL-GroES system forms a nano-cage that allows encapsulation of the non-native substrate proteins and provides a physical environment optimized to promote and accelerate protein folding. This Shewanella woodyi (strain ATCC 51908 / MS32) protein is Chaperonin GroEL.